We begin with the raw amino-acid sequence, 167 residues long: uncharacterized protein (167 aa).

This is an uncharacterized protein from Methanocaldococcus jannaschii (strain ATCC 43067 / DSM 2661 / JAL-1 / JCM 10045 / NBRC 100440) (Methanococcus jannaschii).